We begin with the raw amino-acid sequence, 735 residues long: Photosystem I P700 chlorophyll a apoprotein A2 (735 aa).

8 consecutive transmembrane segments (helical) span residues 46–69, 135–158, 175–199, 273–291, 333–356, 372–398, 420–442, and 518–536; these read LFSTHFGHLAIIGLWVSGNLFHIA, LYQGSIFMMILSAWALFAGWLHLQ, LNHHLAVLFGFSSIAWTGHLVHVAI, IAHHHLAIGCLFVIAGHMY, LHFQLGLALASLGVVTSLVAQHMY, AALYTHHQYIAIALMCGAFAHGAIFFI, AIISHLSWVSLFLGFHTLGLYVH, and FLVHHAIALGLHTTTLILV. Residues C560 and C569 each coordinate [4Fe-4S] cluster. The next 2 helical transmembrane spans lie at 576-597 and 644-666; these read AFYLAVFWALNTVGWLTFYWHW and LAVWSWMFLFGHLVWATGFMFLI. Chlorophyll a-binding residues include H655, M663, and Y671. A phylloquinone-binding site is contributed by W672. A helical transmembrane segment spans residues 708–728; the sequence is VVGLAHFSVGYVLTYAAFLIA.

It belongs to the PsaA/PsaB family. As to quaternary structure, the PsaA/B heterodimer binds the P700 chlorophyll special pair and subsequent electron acceptors. PSI consists of a core antenna complex that captures photons, and an electron transfer chain that converts photonic excitation into a charge separation. The cyanobacterial PSI reaction center is composed of one copy each of PsaA,B,C,D,E,F,I,J,K,L,M and X, and forms trimeric complexes. It depends on PSI electron transfer chain: 5 chlorophyll a, 1 chlorophyll a', 2 phylloquinones and 3 4Fe-4S clusters. PSI core antenna: 90 chlorophyll a, 22 carotenoids, 3 phospholipids and 1 galactolipid. P700 is a chlorophyll a/chlorophyll a' dimer, A0 is one or more chlorophyll a, A1 is one or both phylloquinones and FX is a shared 4Fe-4S iron-sulfur center. as a cofactor.

It localises to the cellular thylakoid membrane. It catalyses the reaction reduced [plastocyanin] + hnu + oxidized [2Fe-2S]-[ferredoxin] = oxidized [plastocyanin] + reduced [2Fe-2S]-[ferredoxin]. Functionally, psaA and PsaB bind P700, the primary electron donor of photosystem I (PSI), as well as the electron acceptors A0, A1 and FX. PSI is a plastocyanin/cytochrome c6-ferredoxin oxidoreductase, converting photonic excitation into a charge separation, which transfers an electron from the donor P700 chlorophyll pair to the spectroscopically characterized acceptors A0, A1, FX, FA and FB in turn. Oxidized P700 is reduced on the lumenal side of the thylakoid membrane by plastocyanin or cytochrome c6. The protein is Photosystem I P700 chlorophyll a apoprotein A2 of Synechococcus sp. (strain CC9902).